The primary structure comprises 389 residues: MFRPSGSGYRQKWTGLTLKGALYGSWILGVFPFAYDSWTRTLRRSKWLIAYGFVLNAAFILLVVTNDTESETPLRMEVFHRNALAEQINGIHDIQSLSMVSIMLLRSFWKSGDIERTLNELEDLQHRYFRNYSLEECISFDRFVLYKGFSVVLELVSMLVLELGMSPNYSAQFFIGLGSLCLMLLAVLLGASHFHLAVVFVYRYVWIVNRELLKLVNKMAIGETVESERMDLLLYLYHRLLDLGQRLASIYDYQMVMVMVSFLIANVLGIYFFIIYSISLNKSLDFKILVFVQALVINMLDFWLNVEICELAERTGRQTSTILKLFNDIENIDEKLERSITDFALFCSHRRLRFHHCGLFYVNYEMGFRMAITSFLYLLFLIQFDYWNL.

Topologically, residues 1-14 are cytoplasmic; sequence MFRPSGSGYRQKWT. The helical transmembrane segment at 15-35 threads the bilayer; sequence GLTLKGALYGSWILGVFPFAY. Topologically, residues 36–46 are extracellular; that stretch reads DSWTRTLRRSK. A helical membrane pass occupies residues 47-67; it reads WLIAYGFVLNAAFILLVVTND. Over 68–142 the chain is Cytoplasmic; it reads TESETPLRME…SLEECISFDR (75 aa). The helical transmembrane segment at 143–163 threads the bilayer; it reads FVLYKGFSVVLELVSMLVLEL. The Extracellular segment spans residues 164–170; the sequence is GMSPNYS. N168 carries N-linked (GlcNAc...) asparagine glycosylation. Residues 171–191 traverse the membrane as a helical segment; the sequence is AQFFIGLGSLCLMLLAVLLGA. The Cytoplasmic portion of the chain corresponds to 192 to 254; sequence SHFHLAVVFV…QRLASIYDYQ (63 aa). The chain crosses the membrane as a helical span at residues 255-275; the sequence is MVMVMVSFLIANVLGIYFFII. Topologically, residues 276 to 287 are extracellular; the sequence is YSISLNKSLDFK. A glycan (N-linked (GlcNAc...) asparagine) is linked at N281. The chain crosses the membrane as a helical span at residues 288 to 308; sequence ILVFVQALVINMLDFWLNVEI. Topologically, residues 309–366 are cytoplasmic; that stretch reads CELAERTGRQTSTILKLFNDIENIDEKLERSITDFALFCSHRRLRFHHCGLFYVNYEM. The helical transmembrane segment at 367–387 threads the bilayer; that stretch reads GFRMAITSFLYLLFLIQFDYW. Residues 388–389 are Extracellular-facing; that stretch reads NL.

It belongs to the insect chemoreceptor superfamily. Gustatory receptor (GR) family. Gr22e subfamily. In terms of tissue distribution, taste bristles on the labial palp, labral and cibarial sense organs, chemosensory bristles on the leg and anterior wing margin. In larvae, is expressed in neurons of the terminal external chemosensory organ and in the dorsal pharyngeal sense organ. Neurons expressing Gr22e also express Gr66a and correspond to taste neurons that mediate sensitivity to bitter compounds.

It is found in the cell membrane. Gustatory receptor which mediates acceptance or avoidance behavior, depending on its substrates. Seems to be involved in the sensing of bitter taste since it is expressed in neurons that mediate sensitivity to bitter compounds which are also avoidance-type taste neurons. This chain is Gustatory receptor for bitter taste 22e (Gr22e), found in Drosophila melanogaster (Fruit fly).